The following is a 122-amino-acid chain: Large ribosomal subunit protein bL12 (122 aa).

Belongs to the bacterial ribosomal protein bL12 family. As to quaternary structure, homodimer. Part of the ribosomal stalk of the 50S ribosomal subunit. Forms a multimeric L10(L12)X complex, where L10 forms an elongated spine to which 2 to 4 L12 dimers bind in a sequential fashion. Binds GTP-bound translation factors.

Functionally, forms part of the ribosomal stalk which helps the ribosome interact with GTP-bound translation factors. Is thus essential for accurate translation. In Stenotrophomonas maltophilia (strain R551-3), this protein is Large ribosomal subunit protein bL12.